An 871-amino-acid chain; its full sequence is Protein arg-6, mitochondrial (871 aa).

A mitochondrion-targeting transit peptide spans 1–44 (MYSACAVALRAGARRVVRRVPKSARALPRAAAARRQISTTAARS). Positions 336-488 (QASTSLSEFK…DFTENGRAML (153 aa)) constitute an N-acetyltransferase domain. Residue Cys-689 is part of the active site.

In the N-terminal section; belongs to the acetylglutamate kinase family. This sequence in the C-terminal section; belongs to the NAGSA dehydrogenase family. Post-translationally, the protein precursor is cleaved into the two biologically active enzymes, the kinase and the reductase.

Its subcellular location is the mitochondrion. It carries out the reaction N-acetyl-L-glutamate 5-semialdehyde + phosphate + NADP(+) = N-acetyl-L-glutamyl 5-phosphate + NADPH + H(+). It catalyses the reaction N-acetyl-L-glutamate + ATP = N-acetyl-L-glutamyl 5-phosphate + ADP. Its pathway is amino-acid biosynthesis; L-arginine biosynthesis; N(2)-acetyl-L-ornithine from L-glutamate: step 2/4. It functions in the pathway amino-acid biosynthesis; L-arginine biosynthesis; N(2)-acetyl-L-ornithine from L-glutamate: step 3/4. This is Protein arg-6, mitochondrial (arg-6) from Neurospora crassa (strain ATCC 24698 / 74-OR23-1A / CBS 708.71 / DSM 1257 / FGSC 987).